Here is a 103-residue protein sequence, read N- to C-terminus: UPF0145 protein RSKD131_1772 (103 aa).

It belongs to the UPF0145 family.

This chain is UPF0145 protein RSKD131_1772, found in Cereibacter sphaeroides (strain KD131 / KCTC 12085) (Rhodobacter sphaeroides).